A 137-amino-acid polypeptide reads, in one-letter code: GEL complex subunit OPTI (137 aa).

Residues 1-44 (MSGGRRKEEPPQPQLANGALKVSVWSKVLRSDAAWEDKDEFLDV) lie on the Cytoplasmic side of the membrane. A helical transmembrane segment spans residues 45-65 (IYWFRQIIAVVLGVIWGVLPL). A topological domain (lumenal) is located at residue Arg-66. A helical transmembrane segment spans residues 67–84 (GFLGIAGFCLINAGVLYL). Topologically, residues 85–103 (YFSNYLQIDEEEYGGTWEL) are cytoplasmic. The chain crosses the membrane as a helical span at residues 104-127 (TKEGFMTSFALFMVCVADSFTTGH). The Lumenal portion of the chain corresponds to 128 to 137 (LDHLLHCHPL).

This sequence belongs to the EMC6 family. As to quaternary structure, component of the GET- and EMC-like (GEL) complex, composed of RAB5IF/OPTI and TMCO1. The GEL complex is part of the multi-pass translocon (MPT) complex, composed of three subcomplexes, the GEL complex (composed of RAB5IF/OPTI and TMCO1), the BOS complex (composed of NCLN/Nicalin, NOMO and TMEM147) and the PAT complex (composed of WDR83OS/Asterix and CCDC47). The MPT complex associates with the SEC61 complex. Interacts with NDUFS3, NDUFA4, NDUFV1, NDUFA9 and NDUFS8 of the mitochondrial membrane respiratory chain NADH dehydrogenase (Complex I). Interacts with UQCRC2 of the ubiquinol-cytochrome c reductase complex (Complex III). Interacts with COX5A and COX7C of the cytochrome c oxidase complex (Complex IV). As to expression, expressed in embryonic stem cells and differentiated neuronal cells.

The protein resides in the endoplasmic reticulum membrane. Its subcellular location is the mitochondrion inner membrane. Functionally, component of the multi-pass translocon (MPT) complex that mediates insertion of multi-pass membrane proteins into the lipid bilayer of membranes. The MPT complex takes over after the SEC61 complex: following membrane insertion of the first few transmembrane segments of proteins by the SEC61 complex, the MPT complex occludes the lateral gate of the SEC61 complex to promote insertion of subsequent transmembrane regions. Within the MPT complex, the GEL subcomplex may mediate insertion of transmembrane regions into the membrane. In addition to its role in multi-pass membrane insertion, RAB5IF/OPTI also acts as an assembly factor for mitochondrial respiratory complexes. The sequence is that of GEL complex subunit OPTI from Homo sapiens (Human).